The chain runs to 210 residues: Glutathione S-transferase P 2 (210 aa).

The 80-residue stretch at 2–81 (PPYTIVYFPS…HLGRSLGLYG (80 aa)) folds into the GST N-terminal domain. Glutathione-binding positions include tyrosine 8, arginine 14, tryptophan 39, lysine 45, 52–53 (QL), and 65–66 (QS). The 122-residue stretch at 83-204 (NQREAAQVDM…SSPEHVNRPI (122 aa)) folds into the GST C-terminal domain.

Belongs to the GST superfamily. Pi family. As to quaternary structure, homodimer. In terms of tissue distribution, selectively expressed in gall bladder, colon, heart, and skeletal muscle.

The enzyme catalyses RX + glutathione = an S-substituted glutathione + a halide anion + H(+). Conjugation of reduced glutathione to a wide number of exogenous and endogenous hydrophobic electrophiles. Cannot metabolize 1-chloro-2,4-dinitrobenzene. The sequence is that of Glutathione S-transferase P 2 (Gstp2) from Mus musculus (Mouse).